Here is a 517-residue protein sequence, read N- to C-terminus: Peptide chain release factor 3 (517 aa).

Residues 9-269 form the tr-type G domain; the sequence is AKRRTFAIIS…DFVEHAPAPR (261 aa). GTP-binding positions include 18–25, 86–90, and 140–143; these read SHPDAGKT, DTPGH, and NKLD.

Belongs to the TRAFAC class translation factor GTPase superfamily. Classic translation factor GTPase family. PrfC subfamily.

It is found in the cytoplasm. Its function is as follows. Increases the formation of ribosomal termination complexes and stimulates activities of RF-1 and RF-2. It binds guanine nucleotides and has strong preference for UGA stop codons. It may interact directly with the ribosome. The stimulation of RF-1 and RF-2 is significantly reduced by GTP and GDP, but not by GMP. The protein is Peptide chain release factor 3 of Halorhodospira halophila (strain DSM 244 / SL1) (Ectothiorhodospira halophila (strain DSM 244 / SL1)).